Here is a 67-residue protein sequence, read N- to C-terminus: Type 3 secretion system chaperone PscE (67 aa).

Residues 16 to 37 (HAAALRQRLQAALAECRRELAR) are a coiled coil.

This sequence belongs to the YscE family. As to quaternary structure, forms a stable ternary complex with PscF/SctF and PscG within the cytoplasm. Co-stabilized by PscG.

Its subcellular location is the cytoplasm. Chaperone of the type III secretion system (T3SS), also called injectisome, which is used to inject bacterial effector proteins into eukaryotic host cells, facilitating the establishment and dissemination of infection. Along with PscG, prevents premature polymerization of the PscF/SctF needle protein within the cytoplasm. Required for type III secretion needle assembly. Also required for cytotoxicity by influencing PscF/SctF levels. In Pseudomonas aeruginosa (strain ATCC 15692 / DSM 22644 / CIP 104116 / JCM 14847 / LMG 12228 / 1C / PRS 101 / PAO1), this protein is Type 3 secretion system chaperone PscE (pscE).